The chain runs to 51 residues: Large ribosomal subunit protein bL33 (51 aa).

The interval 1–23 is disordered; it reads MRDKIKLESSAGTGHFYTTTKNK. The span at 10–20 shows a compositional bias: polar residues; it reads SAGTGHFYTTT.

It belongs to the bacterial ribosomal protein bL33 family.

The protein is Large ribosomal subunit protein bL33 of Chromobacterium violaceum (strain ATCC 12472 / DSM 30191 / JCM 1249 / CCUG 213 / NBRC 12614 / NCIMB 9131 / NCTC 9757 / MK).